The chain runs to 112 residues: DNA-directed RNA polymerases I and III subunit RPAC2 (112 aa).

The protein belongs to the archaeal Rpo11/eukaryotic RPB11/RPC19 RNA polymerase subunit family. In terms of assembly, component of the RNA polymerase I (Pol I) and RNA polymerase III (Pol III) complexes consisting of at least 13 and 17 subunits, respectively.

It localises to the nucleus. Functionally, DNA-dependent RNA polymerase catalyzes the transcription of DNA into RNA using the four ribonucleoside triphosphates as substrates. Common core component of RNA polymerases I and III which synthesize ribosomal RNA precursors and small RNAs, such as 5S rRNA and tRNAs, respectively. This Danio rerio (Zebrafish) protein is DNA-directed RNA polymerases I and III subunit RPAC2 (polr1d).